The following is a 793-amino-acid chain: Meiosis-specific protein ASY3 (793 aa).

Disordered regions lie at residues 1–40 (MSDYRSFGSNYHPSSQSRKISIGVMADSQPKRNLVPDKDD), 58–97 (LQANKKEKSDLAAKQRNSAQVTGHVTSPWRSPRSSHRKLG), 110–287 (LSGS…KAGA), and 305–586 (EGLR…KRNS). The segment covering 7–19 (FGSNYHPSSQSRK) has biased composition (polar residues). The span at 60-70 (ANKKEKSDLAA) shows a compositional bias: basic and acidic residues. A compositionally biased stretch (polar residues) spans 72–86 (QRNSAQVTGHVTSPW). Over residues 110–122 (LSGSKGLNKGLNG) the composition is skewed to low complexity. Residues 131 to 142 (SFQNCPISSPQH) show a composition bias toward polar residues. Basic and acidic residues-rich tracts occupy residues 151–165 (RNDRVMDRSPERMEE) and 177–187 (SQREKMDKPGK). Residues 209–219 (PANNEDVNSET) show a composition bias toward polar residues. Basic and acidic residues predominate over residues 221–248 (EVEKTNFKLSQDKGSNDDPLIKPRHNSD). Basic residues predominate over residues 322–341 (KKQRGRRKNTVVKCRKAHSR). Basic and acidic residues-rich tracts occupy residues 342-354 (KKDEADWSRKEAS), 363-385 (ESTETGKRSSSSDKKGSSHDLHP), 392-407 (QKPDISTREGDFHPSP), and 424-441 (NGDKHERPSNIFREKSVE). 2 stretches are compositionally biased toward low complexity: residues 455–470 (APISSPSPCCSPEASP) and 491–502 (GTKKTSQGTTGQ). Composition is skewed to basic and acidic residues over residues 505-527 (DTEKRLPDFLEKKRDYSFRRESS) and 541-553 (SDERDSDGSREDS). Positions 682–745 (SNLAKTKRKH…KGSIKKQRTS (64 aa)) form a coiled coil.

As to quaternary structure, interacts with ASY1.

Its subcellular location is the chromosome. The protein localises to the nucleus. In terms of biological role, required for normal meiosis in male and female gametophytes. Acts with ASY1 at the interface between the developing chromosome axes and the recombination machinery to ensure interhomolog recombination. Required for synaptonemal complex formation during meiosis. The protein is Meiosis-specific protein ASY3 of Arabidopsis thaliana (Mouse-ear cress).